Consider the following 132-residue polypeptide: Intraflagellar transport protein 20 homolog (132 aa).

Residues 87-114 (EAQQQQLYALIAEKKMQLERYRIEYEAL) adopt a coiled-coil conformation.

Its subcellular location is the golgi apparatus. The protein resides in the cis-Golgi network. The protein localises to the cytoplasm. It localises to the cytoskeleton. It is found in the microtubule organizing center. Its subcellular location is the centrosome. The protein resides in the centriole. The protein localises to the cell projection. It localises to the cilium. It is found in the cytoplasmic vesicle. Its subcellular location is the secretory vesicle. The protein resides in the acrosome. In terms of biological role, involved in ciliary process assembly. May play a role in the trafficking of ciliary membrane proteins from the Golgi complex to the cilium. Regulates the platelet-derived growth factor receptor-alpha (PDGFRA) signaling pathway. Plays an important role in spermatogenesis, particularly spermiogenesis, when germ cells form flagella. The protein is Intraflagellar transport protein 20 homolog (ift20) of Xenopus tropicalis (Western clawed frog).